The primary structure comprises 168 residues: Replicase polyprotein 1ab (168 aa).

One can recognise a Nidovirus-type SAM-dependent 2'-O-MTase domain in the interval 1–165 (PNTKSIDGEN…KLLNFGNHLV (165 aa)).

The replicase polyprotein of coronaviruses is a multifunctional protein: it contains the activities necessary for the transcription of negative stranded RNA, leader RNA, subgenomic mRNAs and progeny virion RNA as well as proteinases responsible for the cleavage of the polyprotein into functional products. The polypeptide is Replicase polyprotein 1ab (rep) (Canine coronavirus (strain Insavc-1) (CCoV)).